The following is a 488-amino-acid chain: DELTA-alicitoxin-Pse2b (488 aa).

A signal peptide spans 1-21 (MSKPIIFLLTAFVVLTDLGAT). The 321-residue stretch at 24–344 (TEKVEVKAKP…GYLNFDCAYE (321 aa)) folds into the MACPF domain. One can recognise an EGF-like domain in the interval 369–398 (VCKLGPEGCHSDDDCESDDLIYCACCGDSC). Cystine bridges form between C370–C383, C377–C391, and C393–C398.

The protein resides in the secreted. Its subcellular location is the nematocyst. Its function is as follows. Causes lethal toxicity to the shrimp Palaemon paucidence, and hemolytic activity toward sheep red blood cells. The polypeptide is DELTA-alicitoxin-Pse2b (Phyllodiscus semoni (Night anemone)).